The primary structure comprises 416 residues: 4-hydroxy-3-methylbut-2-en-1-yl diphosphate synthase (flavodoxin) (416 aa).

Positions 304, 307, 350, and 357 each coordinate [4Fe-4S] cluster.

Belongs to the IspG family. Requires [4Fe-4S] cluster as cofactor.

The enzyme catalyses (2E)-4-hydroxy-3-methylbut-2-enyl diphosphate + oxidized [flavodoxin] + H2O + 2 H(+) = 2-C-methyl-D-erythritol 2,4-cyclic diphosphate + reduced [flavodoxin]. Its pathway is isoprenoid biosynthesis; isopentenyl diphosphate biosynthesis via DXP pathway; isopentenyl diphosphate from 1-deoxy-D-xylulose 5-phosphate: step 5/6. In terms of biological role, converts 2C-methyl-D-erythritol 2,4-cyclodiphosphate (ME-2,4cPP) into 1-hydroxy-2-methyl-2-(E)-butenyl 4-diphosphate. The protein is 4-hydroxy-3-methylbut-2-en-1-yl diphosphate synthase (flavodoxin) of Allorhizobium ampelinum (strain ATCC BAA-846 / DSM 112012 / S4) (Agrobacterium vitis (strain S4)).